Reading from the N-terminus, the 101-residue chain is Small ribosomal subunit protein uS14 (101 aa).

Residues 1-20 form a disordered region; that stretch reads MAKISAVERNKKRERLTKRD.

This sequence belongs to the universal ribosomal protein uS14 family. Part of the 30S ribosomal subunit. Contacts proteins S3 and S10.

Functionally, binds 16S rRNA, required for the assembly of 30S particles and may also be responsible for determining the conformation of the 16S rRNA at the A site. The chain is Small ribosomal subunit protein uS14 from Rhodospirillum rubrum (strain ATCC 11170 / ATH 1.1.1 / DSM 467 / LMG 4362 / NCIMB 8255 / S1).